A 329-amino-acid chain; its full sequence is Porphobilinogen deaminase (329 aa).

Residue Cys250 is modified to S-(dipyrrolylmethanemethyl)cysteine.

This sequence belongs to the HMBS family. Monomer. It depends on dipyrromethane as a cofactor.

The catalysed reaction is 4 porphobilinogen + H2O = hydroxymethylbilane + 4 NH4(+). It functions in the pathway porphyrin-containing compound metabolism; protoporphyrin-IX biosynthesis; coproporphyrinogen-III from 5-aminolevulinate: step 2/4. Tetrapolymerization of the monopyrrole PBG into the hydroxymethylbilane pre-uroporphyrinogen in several discrete steps. The sequence is that of Porphobilinogen deaminase from Burkholderia thailandensis (strain ATCC 700388 / DSM 13276 / CCUG 48851 / CIP 106301 / E264).